The primary structure comprises 327 residues: Phenylalanine--tRNA ligase alpha subunit (327 aa).

E252 provides a ligand contact to Mg(2+).

This sequence belongs to the class-II aminoacyl-tRNA synthetase family. Phe-tRNA synthetase alpha subunit type 1 subfamily. As to quaternary structure, tetramer of two alpha and two beta subunits. Mg(2+) serves as cofactor.

Its subcellular location is the cytoplasm. It carries out the reaction tRNA(Phe) + L-phenylalanine + ATP = L-phenylalanyl-tRNA(Phe) + AMP + diphosphate + H(+). This Aliivibrio fischeri (strain ATCC 700601 / ES114) (Vibrio fischeri) protein is Phenylalanine--tRNA ligase alpha subunit.